A 348-amino-acid polypeptide reads, in one-letter code: Phenylalanine--tRNA ligase alpha subunit (348 aa).

Position 262 (E262) interacts with Mg(2+).

This sequence belongs to the class-II aminoacyl-tRNA synthetase family. Phe-tRNA synthetase alpha subunit type 1 subfamily. As to quaternary structure, tetramer of two alpha and two beta subunits. Requires Mg(2+) as cofactor.

It is found in the cytoplasm. It carries out the reaction tRNA(Phe) + L-phenylalanine + ATP = L-phenylalanyl-tRNA(Phe) + AMP + diphosphate + H(+). This chain is Phenylalanine--tRNA ligase alpha subunit, found in Streptococcus pneumoniae (strain 70585).